Reading from the N-terminus, the 68-residue chain is Large ribosomal subunit protein bL35 (68 aa).

It belongs to the bacterial ribosomal protein bL35 family.

This Rickettsia akari (strain Hartford) protein is Large ribosomal subunit protein bL35.